The sequence spans 358 residues: Neuronal-specific septin-3 (358 aa).

The span at 1–10 (MSKGLPETRT) shows a compositional bias: basic and acidic residues. The tract at residues 1 to 30 (MSKGLPETRTDAAMSELVPEPRPKPAVPMK) is disordered. Residues 58-331 (TGFDFNIMVV…ETYRAKRLND (274 aa)) enclose the Septin-type G domain. Positions 68–75 (GQSGLGKS) are G1 motif. 68–75 (GQSGLGKS) contributes to the GTP binding site. Serine 91 is modified (phosphoserine). Threonine 102 is a GTP binding site. The G3 motif stretch occupies residues 125-128 (DTPG). Residues 207-210 (AKAD) are G4 motif. GTP is bound by residues 208 to 216 (KADTMTLEE), glycine 265, and arginine 280.

The protein belongs to the TRAFAC class TrmE-Era-EngA-EngB-Septin-like GTPase superfamily. Septin GTPase family. Septins polymerize into heterooligomeric protein complexes that form filaments, and can associate with cellular membranes, actin filaments and microtubules. GTPase activity is required for filament formation. Post-translationally, phosphorylated by PKG on serine residues. Phosphorylated by PKG on Ser-91. Brain-specific.

Its subcellular location is the cytoplasm. It is found in the cytoskeleton. The protein resides in the synapse. Filament-forming cytoskeletal GTPase. May play a role in cytokinesis (Potential). This Homo sapiens (Human) protein is Neuronal-specific septin-3.